The chain runs to 120 residues: Dihydroneopterin aldolase (120 aa).

Substrate is bound by residues glutamate 20 and methionine 114.

The protein belongs to the archaeal dihydroneopterin aldolase family. Homotetramer.

It catalyses the reaction 7,8-dihydroneopterin = 6-hydroxymethyl-7,8-dihydropterin + glycolaldehyde. Catalyzes the conversion of 7,8-dihydroneopterin (H2Neo) to 6-hydroxymethyl-7,8-dihydropterin (6-HMD). The chain is Dihydroneopterin aldolase from Picrophilus torridus (strain ATCC 700027 / DSM 9790 / JCM 10055 / NBRC 100828 / KAW 2/3).